We begin with the raw amino-acid sequence, 151 residues long: Ubiquitin-conjugating enzyme E2 W (151 aa).

The UBC core domain occupies 3–151 (SMQKRLQKEL…TKWWYHDDTC (149 aa)). The active-site Glycyl thioester intermediate is Cys91.

The protein belongs to the ubiquitin-conjugating enzyme family.

It is found in the nucleus. The enzyme catalyses S-ubiquitinyl-[E1 ubiquitin-activating enzyme]-L-cysteine + [E2 ubiquitin-conjugating enzyme]-L-cysteine = [E1 ubiquitin-activating enzyme]-L-cysteine + S-ubiquitinyl-[E2 ubiquitin-conjugating enzyme]-L-cysteine.. It catalyses the reaction S-ubiquitinyl-[E1 ubiquitin-activating enzyme]-L-cysteine + [acceptor protein]-N-terminal-amino acid = [E1 ubiquitin-activating enzyme]-L-cysteine + N-terminal-ubiquitinyl-[acceptor protein].. The protein operates within protein modification; protein ubiquitination. Accepts ubiquitin from the E1 complex and catalyzes its covalent attachment to other proteins. Catalyzes monoubiquitination. Involved in degradation of misfolded chaperone substrate and DNA repair. In Xenopus tropicalis (Western clawed frog), this protein is Ubiquitin-conjugating enzyme E2 W (ube2w).